A 141-amino-acid polypeptide reads, in one-letter code: Hemoglobin subunit alpha (141 aa).

The region spanning 1-141 (VLSANDKTNV…VSTVLTSKYR (141 aa)) is the Globin domain. At S3 the chain carries Phosphoserine. K7 is subject to N6-succinyllysine. T8 bears the Phosphothreonine mark. K11 carries the N6-succinyllysine modification. K16 carries the post-translational modification N6-acetyllysine; alternate. An N6-succinyllysine; alternate modification is found at K16. Residue Y24 is modified to Phosphotyrosine. Position 35 is a phosphoserine (S35). At K40 the chain carries N6-succinyllysine. S49 is modified (phosphoserine). Q58 serves as a coordination point for O2. Residue H87 participates in heme b binding. T108 is modified (phosphothreonine). A phosphoserine mark is found at S124 and S131. 2 positions are modified to phosphothreonine: T134 and T137. Residue S138 is modified to Phosphoserine.

Belongs to the globin family. Heterotetramer of two alpha chains and two beta chains. As to expression, red blood cells.

Its function is as follows. Involved in oxygen transport from the lung to the various peripheral tissues. In terms of biological role, hemopressin acts as an antagonist peptide of the cannabinoid receptor CNR1. Hemopressin-binding efficiently blocks cannabinoid receptor CNR1 and subsequent signaling. This chain is Hemoglobin subunit alpha (HBA), found in Didelphis virginiana (North American opossum).